The sequence spans 79 residues: Serine rich endogenous peptide 2 (79 aa).

An N-terminal signal peptide occupies residues 1-19; that stretch reads MANNLGLVILLLVIVLVSC. A disordered region spans residues 25–79; that stretch reads CALASPQKSRPSSEWRRKLIPVRSSRSPRSPSFAPKKPPPPPPSPPLSPSSPPSN. The SCOOP motif signature appears at 45–57; sequence PVRSSRSPRSPSF. The segment covering 45 to 59 has biased composition (low complexity); sequence PVRSSRSPRSPSFAP. The short motif at 49 to 51 is the SxS motif essential for MIK2 binding element; it reads SRS. Positions 60-79 are enriched in pro residues; it reads KKPPPPPPSPPLSPSSPPSN.

The protein belongs to the serine rich endogenous peptide (SCOOP) phytocytokine family. Interacts with MIK2 (via extracellular leucine-rich repeat domain); this interaction triggers the formation of complex between MIK2 and the BAK1/SERK3 and SERK4 coreceptors, and subsequent BAK1 activation by phosphorylation.

It localises to the cell membrane. The protein localises to the secreted. It is found in the extracellular space. Its subcellular location is the apoplast. Brassicaceae-specific phytocytokine (plant endogenous peptide released into the apoplast) perceived by MIK2 in a BAK1/SERK3 and SERK4 coreceptors-dependent manner, that modulates various physiological and antimicrobial processes including growth prevention and reactive oxygen species (ROS) response regulation. In Arabidopsis thaliana (Mouse-ear cress), this protein is Serine rich endogenous peptide 2.